Consider the following 137-residue polypeptide: Bombinin-like peptides 2 (137 aa).

An N-terminal signal peptide occupies residues 1-18; it reads MNFKYIVAVSILIASAYA. Asparagine 70 is subject to Asparagine amide. The tract at residues 92-112 is disordered; that stretch reads DSLEHPEEASEKETRGFNQEE. At isoleucine 136 the chain carries Isoleucine amide.

This sequence belongs to the bombinin family. Expressed by the skin glands.

Its subcellular location is the secreted. In terms of biological role, bombinin-like peptide 2 has antimicrobial activity, but no hemolytic activity. Preliminary evidence indicates that this peptide does not lyse and thus kill the bacteria by its antimicrobial activity. Functionally, bombinin H2 has antibacterial and hemolytic activity. This Bombina variegata (Yellow-bellied toad) protein is Bombinin-like peptides 2.